The primary structure comprises 323 residues: Prenyl transferase (323 aa).

Isopentenyl diphosphate-binding residues include lysine 46, arginine 49, and histidine 81. Residues aspartate 88 and aspartate 92 each coordinate Mg(2+). An an all-trans-polyprenyl diphosphate-binding site is contributed by arginine 97. Isopentenyl diphosphate is bound at residue arginine 98. An all-trans-polyprenyl diphosphate contacts are provided by lysine 174, threonine 175, and glutamine 212.

This sequence belongs to the FPP/GGPP synthase family. Mg(2+) is required as a cofactor.

It is found in the plastid. The protein resides in the cyanelle. Possible role in synthesis of the nonaprenyl side chain of plastoquinone or in synthesis of other prenyl chains such as undekaprenyl pyrophosphate. This Cyanophora paradoxa protein is Prenyl transferase (preA).